An 839-amino-acid chain; its full sequence is A disintegrin and metalloproteinase with thrombospondin motifs 4 (839 aa).

An N-terminal signal peptide occupies residues 1-51; it reads MSHMDSHPGRGLADGWLWGIQPRLLLPTVPVSGSRLVWLLLLASLLPSAWP. Residues 52-212 constitute a propeptide that is removed on maturation; sequence ASPLPREEEI…PSPSPRRAKR (161 aa). Residue Asn68 is glycosylated (N-linked (GlcNAc...) asparagine). Positions 166-209 are disordered; it reads EGGAPNSAGGPGAHILRRKSPVSGQGPMCNVKAPPGKPSPSPRR. The Cysteine switch signature appears at 192-199; sequence PMCNVKAP. Residue Cys194 participates in Zn(2+) binding. The Peptidase M12B domain maps to 218–428; the sequence is RFVETLVVAD…GFGHCLLDKP (211 aa). Cystine bridges form between Cys293-Cys345, Cys322-Cys327, Cys339-Cys423, Cys377-Cys407, Cys449-Cys472, Cys460-Cys482, Cys467-Cys501, Cys495-Cys506, Cys532-Cys569, Cys536-Cys574, and Cys547-Cys559. Zn(2+) is bound at residue His361. The active site involves Glu362. Zn(2+)-binding residues include His365 and His371. The region spanning 437–519 is the Disintegrin domain; sequence TFPGKDYDAD…DQLQAFNVPQ (83 aa). Positions 520–575 constitute a TSP type-1 domain; that stretch reads AGGWGPWGSWGDCSRSCGGGVQFSSRDCTRPVPRNGGKYCEGRRTRFRSCNTQDCP. Residues 686–839 are spacer; sequence SKQSGSFKKF…LRRRSWAGRK (154 aa).

As to quaternary structure, interacts with SRPX2. Zn(2+) is required as a cofactor. The precursor is cleaved by a furin endopeptidase. In terms of processing, glycosylated. Can be O-fucosylated by POFUT2 on a serine or a threonine residue found within the consensus sequence C1-X(2)-(S/T)-C2-G of the TSP type-1 repeat domains where C1 and C2 are the first and second cysteine residue of the repeat, respectively. Fucosylated repeats can then be further glycosylated by the addition of a beta-1,3-glucose residue by the glucosyltransferase, B3GALTL. Fucosylation mediates the efficient secretion of ADAMTS family members. Can also be C-glycosylated with one or two mannose molecules on tryptophan residues within the consensus sequence W-X-X-W of the TPRs, and N-glycosylated. These other glycosylations can also facilitate secretion.

It localises to the secreted. The protein resides in the extracellular space. The protein localises to the extracellular matrix. The enzyme catalyses Glutamyl endopeptidase. Bonds cleaved include 370-Thr-Glu-Gly-Glu-|-Ala-Arg-Gly-Ser-377 in the interglobular domain of mammalian aggrecan.. Cleaves aggrecan, a cartilage proteoglycan, at the '392-Glu-|-Ala-393' site and may be involved in its turnover. Also cleaves COMP. May play an important role in the destruction of aggrecan in arthritic diseases. This chain is A disintegrin and metalloproteinase with thrombospondin motifs 4 (ADAMTS4), found in Bos taurus (Bovine).